The chain runs to 630 residues: Amino acid transporter heavy chain SLC3A2 (630 aa).

An N-acetylmethionine modification is found at M1. The residue at position 2 (E2) is an N-acetylserine. E2 carries the phosphoserine modification. The disordered stretch occupies residues 15 to 39; sequence IPRQLPGSHSEAGVQGLSAGDDSEL. Residues 102-184 are Cytoplasmic-facing; the sequence is MSQDTEVDMK…SPGWVRTRWA (83 aa). Position 103 is a phosphoserine (S103). T106 carries the post-translational modification Phosphothreonine. At S134 the chain carries Phosphoserine. K147 participates in a covalent cross-link: Glycyl lysine isopeptide (Lys-Gly) (interchain with G-Cter in ubiquitin). At S165 the chain carries Phosphoserine. Residue K166 forms a Glycyl lysine isopeptide (Lys-Gly) (interchain with G-Cter in SUMO2) linkage. The chain crosses the membrane as a helical; Signal-anchor for type II membrane protein span at residues 185 to 205; it reads LLLLFWLGWLGMLAGAVVIIV. Topologically, residues 206 to 630 are extracellular; it reads RAPRCRELPA…GLLLRFPYAA (425 aa). Residues N365 and N381 are each glycosylated (N-linked (GlcNAc...) asparagine). Phosphoserine is present on residues S406, S408, and S410. A glycan (N-linked (GlcNAc...) (complex) asparagine) is linked at N424. Residue N506 is glycosylated (N-linked (GlcNAc...) asparagine). Residues S527 and S531 each carry the phosphoserine modification.

As to quaternary structure, disulfide-linked heterodimer with a non-glycosylated catalytic light subunit (SLC7A5, SLC7A6, SLC7A7, SLC7A8, SLC7A10 or SLC7A11). Interacts with TLCD3A/CT120. Interacts with ICAM1. Constitutively and specifically associates with beta-1 integrins (alpha-2/beta-1, alpha-3/beta-1, alpha-5/beta-1 and alpha-6/beta-1), but minimally with alpha-4/beta-1. Interacts with LAPTM4B; recruits SLC3A2 and SLC7A5/LAT1 to lysosomes to promote leucine uptake into these organelles and is required for mTORC1 activation. (Microbial infection) Interacts with hepatitis C virus/HCV envelope glycoprotein E2; the interaction may facilitate viral entry into host cell. Post-translationally, N-glycosylated; N-glycosylation is crucial for trafficking and stability of SLC3A2 to the plasma membrane. Phosphorylation on Ser-406; Ser-408 or Ser-410 and on Ser-527 or Ser-531 by ecto-protein kinases favors heterotypic cell-cell interactions. As to expression, expressed ubiquitously in all tissues tested with highest levels detected in kidney, placenta and testis and weakest level in thymus. During gestation, expression in the placenta was significantly stronger at full-term than at the mid-trimester stage. Expressed in HUVECS and at low levels in resting peripheral blood T-lymphocytes and quiescent fibroblasts. Also expressed in fetal liver and in the astrocytic process of primary astrocytic gliomas. Expressed in retinal endothelial cells and in the intestinal epithelial cell line C2BBe1.

The protein resides in the apical cell membrane. Its subcellular location is the cell membrane. The protein localises to the cell junction. It localises to the lysosome membrane. It is found in the melanosome. The protein resides in the basolateral cell membrane. Acts as a chaperone that facilitates biogenesis and trafficking of functional transporters heterodimers to the plasma membrane. Forms heterodimer with SLC7 family transporters (SLC7A5, SLC7A6, SLC7A7, SLC7A8, SLC7A10 and SLC7A11), a group of amino-acid antiporters. Heterodimers function as amino acids exchangers, the specificity of the substrate depending on the SLC7A subunit. Heterodimers SLC3A2/SLC7A6 or SLC3A2/SLC7A7 mediate the uptake of dibasic amino acids. Heterodimer SLC3A2/SLC7A11 functions as an antiporter by mediating the exchange of extracellular anionic L-cystine and intracellular L-glutamate across the cellular plasma membrane. SLC3A2/SLC7A10 translocates small neutral L- and D-amino acids across the plasma membrane. SLC3A2/SLC75 or SLC3A2/SLC7A8 translocates neutral amino acids with broad specificity, thyroid hormones and L-DOPA. SLC3A2 is essential for plasma membrane localization, stability, and the transport activity of SLC7A5 and SLC7A8. When associated with LAPTM4B, the heterodimer SLC7A5 is recruited to lysosomes to promote leucine uptake into these organelles, and thereby mediates mTORC1 activation. Modulates integrin-related signaling and is essential for integrin-dependent cell spreading, migration and tumor progression. In terms of biological role, (Microbial infection) In case of hepatitis C virus/HCV infection, the complex formed by SLC3A2 and SLC7A5/LAT1 plays a role in HCV propagation by facilitating viral entry into host cell and increasing L-leucine uptake-mediated mTORC1 signaling activation, thereby contributing to HCV-mediated pathogenesis. Functionally, (Microbial infection) Acts as a receptor for malaria parasite Plasmodium vivax (Thai isolate) in immature red blood cells. The polypeptide is Amino acid transporter heavy chain SLC3A2 (Homo sapiens (Human)).